We begin with the raw amino-acid sequence, 314 residues long: ATP synthase gamma chain (314 aa).

The protein belongs to the ATPase gamma chain family. F-type ATPases have 2 components, CF(1) - the catalytic core - and CF(0) - the membrane proton channel. CF(1) has five subunits: alpha(3), beta(3), gamma(1), delta(1), epsilon(1). CF(0) has three main subunits: a, b and c.

Its subcellular location is the cellular thylakoid membrane. Its function is as follows. Produces ATP from ADP in the presence of a proton gradient across the membrane. The gamma chain is believed to be important in regulating ATPase activity and the flow of protons through the CF(0) complex. In Rippkaea orientalis (strain PCC 8801 / RF-1) (Cyanothece sp. (strain PCC 8801)), this protein is ATP synthase gamma chain.